We begin with the raw amino-acid sequence, 240 residues long: tRNA (guanine-N(1)-)-methyltransferase (240 aa).

S-adenosyl-L-methionine contacts are provided by residues Gly111 and 130 to 135 (IGDYVI).

Belongs to the RNA methyltransferase TrmD family. Homodimer.

It localises to the cytoplasm. It catalyses the reaction guanosine(37) in tRNA + S-adenosyl-L-methionine = N(1)-methylguanosine(37) in tRNA + S-adenosyl-L-homocysteine + H(+). Specifically methylates guanosine-37 in various tRNAs. The chain is tRNA (guanine-N(1)-)-methyltransferase from Mycoplasma mycoides subsp. mycoides SC (strain CCUG 32753 / NCTC 10114 / PG1).